The primary structure comprises 59 residues: UPF0434 protein LHK_01103 (59 aa).

This sequence belongs to the UPF0434 family.

This Laribacter hongkongensis (strain HLHK9) protein is UPF0434 protein LHK_01103.